The following is a 59-amino-acid chain: Large ribosomal subunit protein bL32 (59 aa).

Positions 1–59 (MAVQQNRKSRSRRGMRRSHDALSSAALSIDPTTGEKHRRHHVTPDGFYRGKKVVEVSQD) are disordered. The span at 7–16 (RKSRSRRGMR) shows a compositional bias: basic residues.

It belongs to the bacterial ribosomal protein bL32 family.

The chain is Large ribosomal subunit protein bL32 from Hahella chejuensis (strain KCTC 2396).